Consider the following 331-residue polypeptide: Anthranilate phosphoribosyltransferase (331 aa).

Residues glycine 81, 84-85 (GD), serine 89, 91-94 (NCST), 109-117 (KHGNRAVSS), and serine 121 each bind 5-phospho-alpha-D-ribose 1-diphosphate. Residue glycine 81 participates in anthranilate binding. Position 93 (serine 93) interacts with Mg(2+). Asparagine 112 provides a ligand contact to anthranilate. An anthranilate-binding site is contributed by arginine 167. Mg(2+)-binding residues include aspartate 226 and glutamate 227.

The protein belongs to the anthranilate phosphoribosyltransferase family. In terms of assembly, homodimer. It depends on Mg(2+) as a cofactor.

The enzyme catalyses N-(5-phospho-beta-D-ribosyl)anthranilate + diphosphate = 5-phospho-alpha-D-ribose 1-diphosphate + anthranilate. Its pathway is amino-acid biosynthesis; L-tryptophan biosynthesis; L-tryptophan from chorismate: step 2/5. Catalyzes the transfer of the phosphoribosyl group of 5-phosphorylribose-1-pyrophosphate (PRPP) to anthranilate to yield N-(5'-phosphoribosyl)-anthranilate (PRA). The sequence is that of Anthranilate phosphoribosyltransferase from Oleidesulfovibrio alaskensis (strain ATCC BAA-1058 / DSM 17464 / G20) (Desulfovibrio alaskensis).